The primary structure comprises 448 residues: tRNA(Ile)-lysidine synthase (448 aa).

An ATP-binding site is contributed by 30–35 (GGGADS).

Belongs to the tRNA(Ile)-lysidine synthase family.

It is found in the cytoplasm. It catalyses the reaction cytidine(34) in tRNA(Ile2) + L-lysine + ATP = lysidine(34) in tRNA(Ile2) + AMP + diphosphate + H(+). Functionally, ligates lysine onto the cytidine present at position 34 of the AUA codon-specific tRNA(Ile) that contains the anticodon CAU, in an ATP-dependent manner. Cytidine is converted to lysidine, thus changing the amino acid specificity of the tRNA from methionine to isoleucine. This chain is tRNA(Ile)-lysidine synthase, found in Idiomarina loihiensis (strain ATCC BAA-735 / DSM 15497 / L2-TR).